A 444-amino-acid chain; its full sequence is Adenine permease AdeQ (444 aa).

Residues 1–29 (MNNDNTDYVSNESGTLSRLFKLPQHGTTV) lie on the Cytoplasmic side of the membrane. A helical membrane pass occupies residues 30–53 (RTELIAGMTTFLTMVYIVFVNPQI). Topologically, residues 54–63 (LGAAQMDPKV) are periplasmic. A helical membrane pass occupies residues 64 to 82 (VFVTTCLIAGIGSIAMGIF). Over 83–84 (AN) the chain is Cytoplasmic. Residues 85–101 (LPVALAPAMGLNAFFAF) traverse the membrane as a discontinuously helical segment. The Periplasmic segment spans residues 102 to 113 (VVVGAMGISWQT). A helical membrane pass occupies residues 114-133 (GMGAIFWGAVGLFLLTLFRI). The Cytoplasmic segment spans residues 134–145 (RYWMISNIPLSL). Residues 146–166 (RIGITSGIGLFIALMGLKNTG) traverse the membrane as a helical segment. The Periplasmic segment spans residues 167 to 182 (VIVANKDTLVMIGDLS). Residues 183–200 (SHGVLLGILGFFIITVLS) traverse the membrane as a helical segment. The Cytoplasmic segment spans residues 201-204 (SRHF). The chain crosses the membrane as a helical span at residues 205–223 (HAAVLVSIVVTSCCGLFFG). The Periplasmic segment spans residues 224 to 251 (DVHFSGVYSIPPDISGVIGEVDLSGALT). Residues 252–280 (LELAGIIFSFMLINLFDSSGTLIGVTDKA) traverse the membrane as a helical segment. At 281-293 (GLIDGNGKFPNMN) the chain is on the cytoplasmic side. The helical transmembrane segment at 294–309 (KALYVDSVSSVAGAFI) threads the bilayer. At 310–311 (GT) the chain is on the periplasmic side. A discontinuously helical membrane pass occupies residues 312 to 327 (SSVTAYIESTSGVAVG). Over 328 to 331 (GRTG) the chain is Cytoplasmic. The chain crosses the membrane as a helical span at residues 332-346 (LTAVVVGVMFLLVMF). At 347–357 (FSPLVAIVPPY) the chain is on the periplasmic side. The chain crosses the membrane as a helical span at residues 358 to 377 (ATAGALIFVGVLMTSSLARV). Over 378–382 (NWDDF) the chain is Cytoplasmic. The segment at residues 383–418 (TESVPAFITTVMMPFTFSITEGIALGFMSYCIMKVC) is an intramembrane region (discontinuously helical). Residues 419 to 444 (TGRWRDLNLCVVVVAALFALKIILVD) lie on the Cytoplasmic side of the membrane.

Belongs to the nucleobase:cation symporter-2 (NCS2) (TC 2.A.40) family. Azg-like subfamily.

The protein resides in the cell inner membrane. High-affinity transporter for adenine. The sequence is that of Adenine permease AdeQ (adeQ) from Escherichia coli (strain K12).